The following is a 55-amino-acid chain: Light-harvesting polypeptide B-800/860 beta chain (55 aa).

At 1–21 the chain is on the cytoplasmic side; that stretch reads ADANKVWPTGLTVAEAEELHT. Residues 22-44 traverse the membrane as a helical segment; the sequence is YVTNGFRVFVGIAVVAHVLVFAA. Histidine 38 provides a ligand contact to a bacteriochlorophyll. Topologically, residues 45-55 are periplasmic; sequence HPWGRGGALVA.

It belongs to the antenna complex beta subunit family. In terms of assembly, the core complex is formed by different alpha and beta chains, binding bacteriochlorophyll molecules, and arranged most probably in tetrameric structures disposed around the reaction center. The non-pigmented gamma chains may constitute additional components.

Its subcellular location is the cell inner membrane. Functionally, antenna complexes are light-harvesting systems, which transfer the excitation energy to the reaction centers. The polypeptide is Light-harvesting polypeptide B-800/860 beta chain (Rhodocyclus tenuis (Rhodospirillum tenue)).